Reading from the N-terminus, the 405-residue chain is GTPase Obg (405 aa).

An Obg domain is found at 1-159 (MKFVDEVSIF…RDLKLELKVL (159 aa)). The tract at residues 127–148 (NTRFKSSTNRAPRQTTPGKPGD) is disordered. Over residues 129–143 (RFKSSTNRAPRQTTP) the composition is skewed to polar residues. The OBG-type G domain maps to 160-333 (ADVGLLGLPN…LSQAIMRYLD (174 aa)). GTP-binding positions include 166–173 (GLPNAGKS), 191–195 (FTTLV), 213–216 (DIPG), 283–286 (NKAD), and 314–316 (SAL). Residues Ser173 and Thr193 each contribute to the Mg(2+) site. Residues 373–405 (LRRAGVKSVEEADDDDFDDDDDDEGGAEIIYVR) are disordered. Positions 383–398 (EADDDDFDDDDDDEGG) are enriched in acidic residues.

This sequence belongs to the TRAFAC class OBG-HflX-like GTPase superfamily. OBG GTPase family. Monomer. It depends on Mg(2+) as a cofactor.

The protein localises to the cytoplasm. In terms of biological role, an essential GTPase which binds GTP, GDP and possibly (p)ppGpp with moderate affinity, with high nucleotide exchange rates and a fairly low GTP hydrolysis rate. Plays a role in control of the cell cycle, stress response, ribosome biogenesis and in those bacteria that undergo differentiation, in morphogenesis control. The protein is GTPase Obg of Stutzerimonas stutzeri (strain A1501) (Pseudomonas stutzeri).